A 774-amino-acid polypeptide reads, in one-letter code: Ent-beyerene synthase KSL4, chloroplastic (774 aa).

The N-terminal 35 residues, 1-35, are a transit peptide targeting the chloroplast; the sequence is MLLGSTNTLRISSHGKEWEGKTLTGMPLGKVNQRV. Residues Asp525, Asp529, Asn668, Asp669, Thr672, and Glu676 each coordinate Mg(2+). The DDXXD motif motif lies at 525–529; it reads DDFFD.

This sequence belongs to the terpene synthase family. Requires Mg(2+) as cofactor.

The protein resides in the plastid. The protein localises to the chloroplast. The enzyme catalyses ent-copalyl diphosphate = ent-beyerene + diphosphate. The catalysed reaction is ent-copalyl diphosphate = ent-atiserene + diphosphate. It catalyses the reaction ent-copalyl diphosphate = ent-kaur-16-ene + diphosphate. It functions in the pathway secondary metabolite biosynthesis; terpenoid biosynthesis. Functionally, diterpene cyclase involved in the biosynthesis of labdane-related diterpenoids (LRDs) natural products. Catalyzes the cyclization of ent-CDP into ent-beyerene as a major and ent-kaurene and ent-atiserene as minor products. This is Ent-beyerene synthase KSL4, chloroplastic from Ricinus communis (Castor bean).